The chain runs to 197 residues: Holliday junction branch migration complex subunit RuvA (197 aa).

Positions 1–63 (MYAYLKGIIT…EDAHLLYGFR (63 aa)) are domain I. Positions 64–142 (SEDEKKLFLS…VAGDDLPAKI (79 aa)) are domain II. Residues 143 to 147 (AVQAS) form a flexible linker region. The interval 148–197 (AENQELEEAMEAMLALGYKATELKKIKKFFEGTTDTAENYIKSALKMLVK) is domain III.

This sequence belongs to the RuvA family. In terms of assembly, homotetramer. Forms an RuvA(8)-RuvB(12)-Holliday junction (HJ) complex. HJ DNA is sandwiched between 2 RuvA tetramers; dsDNA enters through RuvA and exits via RuvB. An RuvB hexamer assembles on each DNA strand where it exits the tetramer. Each RuvB hexamer is contacted by two RuvA subunits (via domain III) on 2 adjacent RuvB subunits; this complex drives branch migration. In the full resolvosome a probable DNA-RuvA(4)-RuvB(12)-RuvC(2) complex forms which resolves the HJ.

The protein resides in the cytoplasm. Its function is as follows. The RuvA-RuvB-RuvC complex processes Holliday junction (HJ) DNA during genetic recombination and DNA repair, while the RuvA-RuvB complex plays an important role in the rescue of blocked DNA replication forks via replication fork reversal (RFR). RuvA specifically binds to HJ cruciform DNA, conferring on it an open structure. The RuvB hexamer acts as an ATP-dependent pump, pulling dsDNA into and through the RuvAB complex. HJ branch migration allows RuvC to scan DNA until it finds its consensus sequence, where it cleaves and resolves the cruciform DNA. In Streptococcus pneumoniae (strain Taiwan19F-14), this protein is Holliday junction branch migration complex subunit RuvA.